Reading from the N-terminus, the 848-residue chain is MKRSVLTIILFFSCQFWHAFASSVLAIDYGTEWTKAALIKPGIPLEIVLTKDTRRKEQSAVAFKGNERIFGVDASNLATRFPAHSIRNVKELLDTAGLESVLVQKYQSSYPAIQLVENEETTSGISFVISDEENYSLEEIIAMTMEHYISLAEEMAHEKITDLVLTVPPHFNELQRSILLEAARILNKHVLALIDDNVAVAIEYSLSRSFSTDPTYNIIYDSGSGSTSATVISFDTVEGSSLGKKQNITRIRALASGFTLKLSGNEINRKLIGFMKNSFYQKHGIDLSHNHRALARLEKEALRVKHILSANSEAIASIEELADGIDFRLKITRSVLESLCKDMEDAAVEPINKALKKANLTFSEINSIILFGGASRIPFIQSTLADYVSSDKISKNVNADEASVKGAAFYGASLTKSFRVKPLIVQDIINYPYLLSLGTSEYIVALPDSTPYGMQHNVTIHNVSTIGKHPSFPLSNNGELIGEFTLSNITDVEKVCACSNKNIQISFSSDRTKGILVPLSAIMTCEHGELSSKHKLGDRVKSLFGSHDESGLRNNESYPIGFTYKKYGEMSDNALRLASAKLERRLQIDKSKAAHDNALNELETLLYRAQAMVDDDEFLEFANPEETKILKNDSVESYDWLIEYGSQSPTSEVTDRYKKLDDTLKSISFRFDQAKQFNTSLENFKNALERAESLLTNFDVPDYPLNVYDEKDVKRVNSLRGTSYKKLGNQYYNDTQWLKDNLDSHLSHTLSEDPLIKVEELEEKAKRLQELTYEYLRRSLQQPKLKAKKGASSSSTAESKVEDETFTNDIEPTTALNSTSTQETEKSRASVTQRPSSLQQEIDDSDEL.

An N-terminal signal peptide occupies residues 1–21; that stretch reads MKRSVLTIILFFSCQFWHAFA. 11 N-linked (GlcNAc...) asparagine glycosylation sites follow: asparagine 134, asparagine 247, asparagine 359, asparagine 457, asparagine 462, asparagine 488, asparagine 555, asparagine 632, asparagine 678, asparagine 733, and asparagine 817. Residues 784–848 form a disordered region; that stretch reads KLKAKKGASS…QQEIDDSDEL (65 aa). Polar residues-rich tracts occupy residues 807 to 822 and 829 to 840; these read TNDI…TSTQ and ASVTQRPSSLQQ. Positions 845–848 match the Prevents secretion from ER motif; sequence SDEL.

It belongs to the heat shock protein 70 family.

The protein resides in the endoplasmic reticulum lumen. It catalyses the reaction ATP + H2O = ADP + phosphate + H(+). Its function is as follows. Chaperone required for protein translocation and folding in the endoplasmic reticulum. The protein is Heat shock protein 70 homolog lhs1 of Schizosaccharomyces pombe (strain 972 / ATCC 24843) (Fission yeast).